The sequence spans 229 residues: Cytidylate kinase (229 aa).

ATP is bound at residue 12–20 (GPSGAGKGT).

Belongs to the cytidylate kinase family. Type 1 subfamily.

The protein resides in the cytoplasm. The catalysed reaction is CMP + ATP = CDP + ADP. It carries out the reaction dCMP + ATP = dCDP + ADP. This chain is Cytidylate kinase, found in Shewanella frigidimarina (strain NCIMB 400).